We begin with the raw amino-acid sequence, 962 residues long: Thrombospondin-3a (962 aa).

The N-terminal stretch at 1–23 (MEQMFVHIWVSLVVLMSVWSAQS) is a signal peptide. Residues 24–196 (DKKQDVPVID…MDTLKLALGG (173 aa)) enclose the Laminin G-like domain. One can recognise an EGF-like 1 domain in the interval 277 to 318 (PRSRCQPNPCFKGVSCMETFEYPGYRCGPCPDGMTGNGTHCQ). 20 cysteine pairs are disulfide-bonded: Cys281–Cys292, Cys286–Cys303, Cys306–Cys317, Cys323–Cys335, Cys329–Cys344, Cys347–Cys371, Cys377–Cys390, Cys384–Cys399, Cys402–Cys414, Cys420–Cys434, Cys428–Cys444, Cys446–Cys457, Cys473–Cys480, Cys485–Cys505, Cys521–Cys541, Cys544–Cys564, Cys580–Cys600, Cys603–Cys623, Cys641–Cys661, and Cys684–Cys704. Asn313 carries N-linked (GlcNAc...) asparagine glycosylation. Residues 319–358 (DIDECSEAQPCYTPGACVNTARGFTCESCPPGMWGPPLSG) form the EGF-like 2; calcium-binding domain. Residues 373-412 (DIDECVDLANACTPNSVCINIIGSFRCGQCKTGYVGNQTA) form the EGF-like 3; calcium-binding domain. Residue Asn409 is glycosylated (N-linked (GlcNAc...) asparagine). Residues 416 to 458 (PRKSCSSLSFNPCDANAHCVMQRNGDVSCACNVGWAGNGHTCG) form the EGF-like 4 domain. TSP type-3 repeat units follow at residues 459 to 493 (KDTD…NSGQ), 494 to 529 (EDAD…NKDQ), 530 to 552 (QNSD…NIDQ), 553 to 588 (KDTD…NPMQ), 589 to 611 (TDRD…NPMQ), 612 to 649 (TDVD…NSSQ), 650 to 692 (LDSD…NPNQ), and 693 to 728 (KDSD…EVTL). Residues 548 to 704 (PNIDQKDTDS…SDSNGVGDVC (157 aa)) form a disordered region. The segment covering 557–570 (SNGEGDACDDDIDG) has biased composition (acidic residues). Positions 631-641 (GDGHQDTRDNC) are enriched in basic and acidic residues. Asn646 is a glycosylation site (N-linked (GlcNAc...) asparagine). Over residues 652 to 669 (SDNDGIGDDCDEDDDNDG) the composition is skewed to acidic residues. Asn710 carries N-linked (GlcNAc...) asparagine glycosylation. Cys720 and Cys941 form a disulfide bridge. One can recognise a TSP C-terminal domain in the interval 732–946 (RAYQTVILDP…LRYRCNDTVP (215 aa)). Residue Asn942 is glycosylated (N-linked (GlcNAc...) asparagine).

This sequence belongs to the thrombospondin family. As to quaternary structure, oligomer; disulfide-linked.

Its function is as follows. Adhesive glycoprotein that mediates cell-to-cell and cell-to-matrix interactions. Can bind to fibrinogen, fibronectin, laminin and type V collagen. The protein is Thrombospondin-3a (thbs3a) of Danio rerio (Zebrafish).